Reading from the N-terminus, the 192-residue chain is Pyridoxine/pyridoxamine 5'-phosphate oxidase (192 aa).

FMN-binding positions include 41 to 46 (RMMLLK), 56 to 57 (FT), R62, K63, and Q85. K46 is a binding site for substrate. 3 residues coordinate substrate: Y103, R107, and S111. FMN is bound by residues 120–121 (QS) and W165. 171-173 (RLH) is a substrate binding site. FMN is bound at residue R175.

Belongs to the pyridoxamine 5'-phosphate oxidase family. As to quaternary structure, homodimer. Requires FMN as cofactor.

It catalyses the reaction pyridoxamine 5'-phosphate + O2 + H2O = pyridoxal 5'-phosphate + H2O2 + NH4(+). The enzyme catalyses pyridoxine 5'-phosphate + O2 = pyridoxal 5'-phosphate + H2O2. Its pathway is cofactor metabolism; pyridoxal 5'-phosphate salvage; pyridoxal 5'-phosphate from pyridoxamine 5'-phosphate: step 1/1. It participates in cofactor metabolism; pyridoxal 5'-phosphate salvage; pyridoxal 5'-phosphate from pyridoxine 5'-phosphate: step 1/1. In terms of biological role, catalyzes the oxidation of either pyridoxine 5'-phosphate (PNP) or pyridoxamine 5'-phosphate (PMP) into pyridoxal 5'-phosphate (PLP). The sequence is that of Pyridoxine/pyridoxamine 5'-phosphate oxidase from Zymomonas mobilis subsp. mobilis (strain ATCC 31821 / ZM4 / CP4).